Reading from the N-terminus, the 506-residue chain is Cytochrome P450 94B3 (506 aa).

A helical transmembrane segment spans residues 2-22; it reads AFLLSFLILAFLITIIFFLSS. Cysteine 447 lines the heme pocket.

The protein belongs to the cytochrome P450 family. It depends on heme as a cofactor.

The protein resides in the membrane. Its subcellular location is the endoplasmic reticulum membrane. It carries out the reaction a jasmonyl-L-amino acid + reduced [NADPH--hemoprotein reductase] + O2 = a 12-hydroxyjasmonyl-L-alpha-amino acid + oxidized [NADPH--hemoprotein reductase] + H2O + H(+). It catalyses the reaction L-isoleucine-(+)-7-isojasmonate + NADPH + O2 + H(+) = L-isoleucine-(+)-12-hydroxy-7-isojasmonate + NADP(+) + H2O. The enzyme catalyses a jasmonyl-L-isoleucinate + NADPH + O2 + H(+) = L-isoleucine-12-hydroxyjasmonate + NADP(+) + H2O. Its function is as follows. Hydroxylase involved in the oxidation of the plant hormone jasmonoyl-L-isoleucine (JA-Ile), a bioactive phytohormone of the jasmonate-mediated signaling pathway. Converts JA-Ile to 12-hydroxy-JA-Ile. Exerts negative feedback control on JA-Ile levels and plays a key role in attenuation of jasmonate responses. Negatively regulates the expression of wound-induced genes TIFY11A/JAZ5, TIFY5A/JAZ8 and TIFY5A/JAZ10. Catalyzes the hydroxylation of jasmonoyl-L-valine (JA-Val), jasmonoyl-L-leucine (JA-Leu) and jasmonoyl-L-phenylalanine (JA-Phe) in vitro. Converts JA-Val, JA-Leu and JA-Phe to 12-hydroxy-JA-Val, 12-hydroxy-JA-Leu and 12-hydroxy-JA-Phe, respectively. The chain is Cytochrome P450 94B3 from Arabidopsis thaliana (Mouse-ear cress).